The sequence spans 218 residues: Pyridoxine/pyridoxamine 5'-phosphate oxidase (218 aa).

Residues 14–17 (RREY) and Lys-72 contribute to the substrate site. FMN contacts are provided by residues 67 to 72 (RIVLLK), 82 to 83 (YT), Arg-88, Lys-89, and Gln-111. The substrate site is built by Tyr-129, Arg-133, and Ser-137. Residues 146–147 (QS) and Trp-191 each bind FMN. Residue 197-199 (RLH) coordinates substrate. Arg-201 serves as a coordination point for FMN.

It belongs to the pyridoxamine 5'-phosphate oxidase family. As to quaternary structure, homodimer. The cofactor is FMN.

It catalyses the reaction pyridoxamine 5'-phosphate + O2 + H2O = pyridoxal 5'-phosphate + H2O2 + NH4(+). The enzyme catalyses pyridoxine 5'-phosphate + O2 = pyridoxal 5'-phosphate + H2O2. It participates in cofactor metabolism; pyridoxal 5'-phosphate salvage; pyridoxal 5'-phosphate from pyridoxamine 5'-phosphate: step 1/1. Its pathway is cofactor metabolism; pyridoxal 5'-phosphate salvage; pyridoxal 5'-phosphate from pyridoxine 5'-phosphate: step 1/1. Its function is as follows. Catalyzes the oxidation of either pyridoxine 5'-phosphate (PNP) or pyridoxamine 5'-phosphate (PMP) into pyridoxal 5'-phosphate (PLP). The sequence is that of Pyridoxine/pyridoxamine 5'-phosphate oxidase from Escherichia coli (strain 55989 / EAEC).